We begin with the raw amino-acid sequence, 354 residues long: Putrescine/cadaverine-binding protein (354 aa).

The signal sequence occupies residues 1–20; sequence MMKKLLLVATLMAGAAQATA.

The protein belongs to the bacterial solute-binding protein 1 family.

Its subcellular location is the periplasm. Functionally, binds putrescine and cadaverine. This is Putrescine/cadaverine-binding protein from Pseudomonas aeruginosa (strain ATCC 15692 / DSM 22644 / CIP 104116 / JCM 14847 / LMG 12228 / 1C / PRS 101 / PAO1).